Reading from the N-terminus, the 491-residue chain is UDP-N-acetylmuramoyl-L-alanyl-D-glutamate--2,6-diaminopimelate ligase (491 aa).

Residue Ser30 participates in UDP-N-acetyl-alpha-D-muramoyl-L-alanyl-D-glutamate binding. Residue 108–114 (GTNGKTT) coordinates ATP. UDP-N-acetyl-alpha-D-muramoyl-L-alanyl-D-glutamate-binding positions include Asn149, 150 to 151 (TT), Ser177, Gln183, and Arg185. Lys217 is modified (N6-carboxylysine). Residues Arg383, 407-410 (DNPR), Gly458, and Glu462 contribute to the meso-2,6-diaminopimelate site. Positions 407–410 (DNPR) match the Meso-diaminopimelate recognition motif motif.

The protein belongs to the MurCDEF family. MurE subfamily. The cofactor is Mg(2+). Carboxylation is probably crucial for Mg(2+) binding and, consequently, for the gamma-phosphate positioning of ATP.

Its subcellular location is the cytoplasm. It catalyses the reaction UDP-N-acetyl-alpha-D-muramoyl-L-alanyl-D-glutamate + meso-2,6-diaminopimelate + ATP = UDP-N-acetyl-alpha-D-muramoyl-L-alanyl-gamma-D-glutamyl-meso-2,6-diaminopimelate + ADP + phosphate + H(+). Its pathway is cell wall biogenesis; peptidoglycan biosynthesis. Its function is as follows. Catalyzes the addition of meso-diaminopimelic acid to the nucleotide precursor UDP-N-acetylmuramoyl-L-alanyl-D-glutamate (UMAG) in the biosynthesis of bacterial cell-wall peptidoglycan. The protein is UDP-N-acetylmuramoyl-L-alanyl-D-glutamate--2,6-diaminopimelate ligase of Listeria monocytogenes serovar 1/2a (strain ATCC BAA-679 / EGD-e).